The chain runs to 102 residues: Matrix Gla protein (102 aa).

Phosphoserine occurs at positions 2, 3, and 5. Residues 18–45 (DANSFMRQPRPPNHWDSRDRFKSPRERT) form a disordered region. The region spanning 27 to 73 (RPPNHWDSRDRFKSPRERTREKCEEYRPCERLARQVGLKRAYGKYFG) is the Gla domain. The span at 30 to 45 (NHWDSRDRFKSPRERT) shows a compositional bias: basic and acidic residues. 4 positions are modified to 4-carboxyglutamate: glutamate 43, glutamate 47, glutamate 50, and glutamate 51. Cysteine 49 and cysteine 55 form a disulfide bridge. The interval 72–102 (FGNRRQRPSTSGRLRPRKYRASRYRNHHYRY) is disordered. The span at 85 to 102 (LRPRKYRASRYRNHHYRY) shows a compositional bias: basic residues.

Belongs to the osteocalcin/matrix Gla protein family. In terms of processing, requires vitamin K-dependent gamma-carboxylation for its function. Accounts for 35-40% of the total protein in the acid demineralization extract of calcified cartilage.

Its subcellular location is the secreted. Its function is as follows. Associates with the organic matrix of calcified cartilage. This chain is Matrix Gla protein (mgp), found in Galeorhinus galeus (Tope shark).